A 117-amino-acid polypeptide reads, in one-letter code: Immunoglobulin lambda variable 1-51 (117 aa).

A signal peptide spans 1–19 (MTCSPLLLTLLIHCTGSWA). Gln-20 is subject to Pyrrolidone carboxylic acid. A framework-1 region spans residues 20–44 (QSVLTQPPSVSAAPGQKVTISCSGS). Residues 20 to 117 (QSVLTQPPSV…CGTWDSSLSA (98 aa)) enclose the Ig-like domain. Cys-41 and Cys-108 form a disulfide bridge. Positions 45 to 52 (SSNIGNNY) are complementarity-determining-1. The framework-2 stretch occupies residues 53-69 (VSWYQQLPGTAPKLLIY). Residues 70-72 (DNN) form a complementarity-determining-2 region. The tract at residues 73–108 (KRPSGIPDRFSGSKSGTSATLGITGLQTGDEADYYC) is framework-3. The complementarity-determining-3 stretch occupies residues 109–117 (GTWDSSLSA).

In terms of assembly, immunoglobulins are composed of two identical heavy chains and two identical light chains; disulfide-linked.

Its subcellular location is the secreted. The protein resides in the cell membrane. Its function is as follows. V region of the variable domain of immunoglobulin light chains that participates in the antigen recognition. Immunoglobulins, also known as antibodies, are membrane-bound or secreted glycoproteins produced by B lymphocytes. In the recognition phase of humoral immunity, the membrane-bound immunoglobulins serve as receptors which, upon binding of a specific antigen, trigger the clonal expansion and differentiation of B lymphocytes into immunoglobulins-secreting plasma cells. Secreted immunoglobulins mediate the effector phase of humoral immunity, which results in the elimination of bound antigens. The antigen binding site is formed by the variable domain of one heavy chain, together with that of its associated light chain. Thus, each immunoglobulin has two antigen binding sites with remarkable affinity for a particular antigen. The variable domains are assembled by a process called V-(D)-J rearrangement and can then be subjected to somatic hypermutations which, after exposure to antigen and selection, allow affinity maturation for a particular antigen. The chain is Immunoglobulin lambda variable 1-51 from Homo sapiens (Human).